Here is a 466-residue protein sequence, read N- to C-terminus: MAPGIPAAMERPHFIGIGGAGMSGIAKILAQRGAKVAGSDAKESATAESLRALGATVHIGHAAGHLADDASCVVVSSAIRADNPELLRAGELAVPVVHRSDALASLMNGLRAIAVAGTHGKTTTTSMLAVALSSLGLAPSYAIGGDLEGPGTNATHGEGDIFVAEADESDRSFQKYDPEVAIVLNVELDHHANYASMDEIYDSFETFVGKIVPGGTLVVSADQPGAVELTRRVRDLSDLKVVTYGCAEDADVRVHKVTPRGLTSEVTVLLNGKFLTFTVSVPGAHYAHNAVAALAAGVALGIPAHNLASALGSYTGVKRRLQLKGEAAGVQVIDSYAHHPTEMTADLEAMRGAAADARILVVFQPHLFSRTQELGTEMGQALARADASVVLDIYPAREDPIPGITSALIIDAAKEAGAEVTAVHDQADVPAAVAGMAKSGDLVLTMGAGDVTDLGPRILDHLASGR.

117-123 (GTHGKTT) contacts ATP.

This sequence belongs to the MurCDEF family.

It localises to the cytoplasm. The catalysed reaction is UDP-N-acetyl-alpha-D-muramate + L-alanine + ATP = UDP-N-acetyl-alpha-D-muramoyl-L-alanine + ADP + phosphate + H(+). The protein operates within cell wall biogenesis; peptidoglycan biosynthesis. Functionally, cell wall formation. The sequence is that of UDP-N-acetylmuramate--L-alanine ligase from Streptomyces griseus subsp. griseus (strain JCM 4626 / CBS 651.72 / NBRC 13350 / KCC S-0626 / ISP 5235).